A 492-amino-acid polypeptide reads, in one-letter code: Probable proline dehydrogenase, mitochondrial (492 aa).

Belongs to the proline oxidase family. It depends on FAD as a cofactor.

The protein localises to the mitochondrion. The catalysed reaction is L-proline + a quinone = (S)-1-pyrroline-5-carboxylate + a quinol + H(+). Converts proline to delta-1-pyrroline-5-carboxylate. The polypeptide is Probable proline dehydrogenase, mitochondrial (Schizosaccharomyces pombe (strain 972 / ATCC 24843) (Fission yeast)).